A 261-amino-acid polypeptide reads, in one-letter code: Imidazole glycerol phosphate synthase subunit HisF (261 aa).

Residues Asp-16 and Asp-135 contribute to the active site.

Belongs to the HisA/HisF family. As to quaternary structure, heterodimer of HisH and HisF.

Its subcellular location is the cytoplasm. It carries out the reaction 5-[(5-phospho-1-deoxy-D-ribulos-1-ylimino)methylamino]-1-(5-phospho-beta-D-ribosyl)imidazole-4-carboxamide + L-glutamine = D-erythro-1-(imidazol-4-yl)glycerol 3-phosphate + 5-amino-1-(5-phospho-beta-D-ribosyl)imidazole-4-carboxamide + L-glutamate + H(+). The protein operates within amino-acid biosynthesis; L-histidine biosynthesis; L-histidine from 5-phospho-alpha-D-ribose 1-diphosphate: step 5/9. In terms of biological role, IGPS catalyzes the conversion of PRFAR and glutamine to IGP, AICAR and glutamate. The HisF subunit catalyzes the cyclization activity that produces IGP and AICAR from PRFAR using the ammonia provided by the HisH subunit. The polypeptide is Imidazole glycerol phosphate synthase subunit HisF (Mycobacterium leprae (strain Br4923)).